The sequence spans 119 residues: Phosphoribosyl-AMP cyclohydrolase (119 aa).

Asp77 lines the Mg(2+) pocket. Cys78 is a Zn(2+) binding site. Mg(2+)-binding residues include Asp79 and Asp81. The Zn(2+) site is built by Cys94 and Cys101.

Belongs to the PRA-CH family. As to quaternary structure, homodimer. It depends on Mg(2+) as a cofactor. Zn(2+) is required as a cofactor.

The protein localises to the cytoplasm. It carries out the reaction 1-(5-phospho-beta-D-ribosyl)-5'-AMP + H2O = 1-(5-phospho-beta-D-ribosyl)-5-[(5-phospho-beta-D-ribosylamino)methylideneamino]imidazole-4-carboxamide. The protein operates within amino-acid biosynthesis; L-histidine biosynthesis; L-histidine from 5-phospho-alpha-D-ribose 1-diphosphate: step 3/9. Functionally, catalyzes the hydrolysis of the adenine ring of phosphoribosyl-AMP. The chain is Phosphoribosyl-AMP cyclohydrolase from Cereibacter sphaeroides (strain ATCC 17025 / ATH 2.4.3) (Rhodobacter sphaeroides).